We begin with the raw amino-acid sequence, 226 residues long: Lipoprotein-releasing system ATP-binding protein LolD (226 aa).

One can recognise an ABC transporter domain in the interval L5 to S226. G41 to S48 contributes to the ATP binding site.

Belongs to the ABC transporter superfamily. Lipoprotein translocase (TC 3.A.1.125) family. The complex is composed of two ATP-binding proteins (LolD) and two transmembrane proteins (LolC and LolE).

The protein localises to the cell inner membrane. In terms of biological role, part of the ABC transporter complex LolCDE involved in the translocation of mature outer membrane-directed lipoproteins, from the inner membrane to the periplasmic chaperone, LolA. Responsible for the formation of the LolA-lipoprotein complex in an ATP-dependent manner. This is Lipoprotein-releasing system ATP-binding protein LolD from Haemophilus ducreyi (strain 35000HP / ATCC 700724).